A 365-amino-acid polypeptide reads, in one-letter code: Leu/Ile/Val/Thr-binding protein (365 aa).

The signal sequence occupies residues 1–21 (MKGKTLLAGCIALSLSHMAFA). A disulfide bridge links Cys74 with Cys99.

This sequence belongs to the leucine-binding protein family.

The protein localises to the periplasm. Its function is as follows. This protein is a component of the leucine, isoleucine, valine, threonine transport system, which is one of the two periplasmic binding protein-dependent transport systems of the high-affinity transport of the branched-chain amino acids. The protein is Leu/Ile/Val/Thr-binding protein (livJ) of Salmonella typhimurium (strain LT2 / SGSC1412 / ATCC 700720).